The following is a 302-amino-acid chain: NAD kinase (302 aa).

Aspartate 79 functions as the Proton acceptor in the catalytic mechanism. Residues 79 to 80, 153 to 154, arginine 181, aspartate 183, 194 to 199, alanine 218, and glutamine 252 each bind NAD(+); these read DG, ND, and TAYALS.

It belongs to the NAD kinase family. A divalent metal cation is required as a cofactor.

Its subcellular location is the cytoplasm. The catalysed reaction is NAD(+) + ATP = ADP + NADP(+) + H(+). Its function is as follows. Involved in the regulation of the intracellular balance of NAD and NADP, and is a key enzyme in the biosynthesis of NADP. Catalyzes specifically the phosphorylation on 2'-hydroxyl of the adenosine moiety of NAD to yield NADP. This is NAD kinase from Ralstonia nicotianae (strain ATCC BAA-1114 / GMI1000) (Ralstonia solanacearum).